The following is a 524-amino-acid chain: GMP synthase [glutamine-hydrolyzing] (524 aa).

The 190-residue stretch at 7-196 (PVLVVDFGAQ…LHELAGIPAS (190 aa)) folds into the Glutamine amidotransferase type-1 domain. Catalysis depends on cysteine 84, which acts as the Nucleophile. Active-site residues include histidine 170 and glutamate 172. One can recognise a GMPS ATP-PPase domain in the interval 197-398 (WTPSNIADVL…LGLPEEIVAR (202 aa)). 224 to 230 (SGGVDSA) serves as a coordination point for ATP.

As to quaternary structure, homodimer.

It carries out the reaction XMP + L-glutamine + ATP + H2O = GMP + L-glutamate + AMP + diphosphate + 2 H(+). It functions in the pathway purine metabolism; GMP biosynthesis; GMP from XMP (L-Gln route): step 1/1. Its function is as follows. Catalyzes the synthesis of GMP from XMP. The chain is GMP synthase [glutamine-hydrolyzing] from Nocardia farcinica (strain IFM 10152).